Consider the following 358-residue polypeptide: Cyclin-D1-binding protein 1 (358 aa).

Interaction with TCF3 stretches follow at residues 1–183 (MESA…VDLV) and 149–358 (ISYN…EVES). Interaction with RPLP0 stretches follow at residues 1 to 189 (MESA…AHEE) and 238 to 358 (LIIP…EVES). The tract at residues 1–207 (MESAAVSAAP…DPYCGLLNDI (207 aa)) is required for interaction with CCND1.

The protein belongs to the CCNDBP1 family. In terms of assembly, interacts with CCND1 and GRAP2. May also interact with COPS5, RPLP0, SIRT6, SYF2 and TCF3. In terms of processing, phosphorylated.

It is found in the cytoplasm. The protein resides in the nucleus. In terms of biological role, may negatively regulate cell cycle progression. May act at least in part via inhibition of the cyclin-D1/CDK4 complex, thereby preventing phosphorylation of RB1 and blocking E2F-dependent transcription. This Bos taurus (Bovine) protein is Cyclin-D1-binding protein 1 (CCNDBP1).